We begin with the raw amino-acid sequence, 484 residues long: Probable glycine dehydrogenase (decarboxylating) subunit 2 (484 aa).

At Lys-264 the chain carries N6-(pyridoxal phosphate)lysine.

It belongs to the GcvP family. C-terminal subunit subfamily. The glycine cleavage system is composed of four proteins: P, T, L and H. In this organism, the P 'protein' is a heterodimer of two subunits. It depends on pyridoxal 5'-phosphate as a cofactor.

The catalysed reaction is N(6)-[(R)-lipoyl]-L-lysyl-[glycine-cleavage complex H protein] + glycine + H(+) = N(6)-[(R)-S(8)-aminomethyldihydrolipoyl]-L-lysyl-[glycine-cleavage complex H protein] + CO2. The glycine cleavage system catalyzes the degradation of glycine. The P protein binds the alpha-amino group of glycine through its pyridoxal phosphate cofactor; CO(2) is released and the remaining methylamine moiety is then transferred to the lipoamide cofactor of the H protein. This is Probable glycine dehydrogenase (decarboxylating) subunit 2 from Legionella pneumophila subsp. pneumophila (strain Philadelphia 1 / ATCC 33152 / DSM 7513).